We begin with the raw amino-acid sequence, 153 residues long: Replicase large subunit (153 aa).

It belongs to the tobamovirus RNA-directed RNA polymerase family.

The enzyme catalyses RNA(n) + a ribonucleoside 5'-triphosphate = RNA(n+1) + diphosphate. In terms of biological role, the replicase large subunit is an RNA-dependent RNA polymerase active in viral RNA replication. The chain is Replicase large subunit from Citrullus (Cucumber).